Consider the following 624-residue polypeptide: Bifunctional 3'-phosphoadenosine 5'-phosphosulfate synthase 1 (624 aa).

Position 1 is an N-acetylmethionine (methionine 1). Positions 1 to 225 (MEIPGSLCKK…VVELLQERDI (225 aa)) are adenylyl-sulfate kinase. Residue lysine 12 is modified to N6-acetyllysine. 62–67 (GAGKTT) provides a ligand contact to ATP. Adenosine 5'-phosphosulfate-binding positions include 89–92 (DNIR), phenylalanine 101, 106–109 (REEN), 132–133 (IS), lysine 171, and 184–185 (GF). Residues cysteine 207, cysteine 212, 419–422 (QLRN), 521–525 (GRDPA), and alanine 563 each bind ATP. The tract at residues 234–624 (VKELYVPENK…TEYYKSLEKA (391 aa)) is sulfate adenylyltransferase.

In the N-terminal section; belongs to the APS kinase family. The protein in the C-terminal section; belongs to the sulfate adenylyltransferase family. In terms of assembly, homodimer. As to expression, expressed in testis, pancreas, kidney, thymus, prostate, ovary, small intestine, colon, leukocytes and liver. Also expressed in high endothelial venules (HEV) cells and in cartilage.

It carries out the reaction sulfate + ATP + H(+) = adenosine 5'-phosphosulfate + diphosphate. The catalysed reaction is adenosine 5'-phosphosulfate + ATP = 3'-phosphoadenylyl sulfate + ADP + H(+). The protein operates within sulfur metabolism; sulfate assimilation. Its activity is regulated as follows. Inhibited by chlorate. The kinase activity is subject to inhibition by the substrate adenylyl sulfate. Its function is as follows. Bifunctional enzyme with both ATP sulfurylase and APS kinase activity, which mediates two steps in the sulfate activation pathway. The first step is the transfer of a sulfate group to ATP to yield adenosine 5'-phosphosulfate (APS), and the second step is the transfer of a phosphate group from ATP to APS yielding 3'-phosphoadenylylsulfate (PAPS: activated sulfate donor used by sulfotransferase). In mammals, PAPS is the sole source of sulfate; APS appears to be only an intermediate in the sulfate-activation pathway. Required for normal biosynthesis of sulfated L-selectin ligands in endothelial cells. The sequence is that of Bifunctional 3'-phosphoadenosine 5'-phosphosulfate synthase 1 (PAPSS1) from Homo sapiens (Human).